The following is a 182-amino-acid chain: UPF0200 protein Mboo_1593 (182 aa).

8 to 15 (GLPASGKG) serves as a coordination point for ATP.

This sequence belongs to the UPF0200 family.

This Methanoregula boonei (strain DSM 21154 / JCM 14090 / 6A8) protein is UPF0200 protein Mboo_1593.